A 946-amino-acid chain; its full sequence is Bifunctional lysine-specific demethylase and histidyl-hydroxylase NO66 (946 aa).

A disordered region spans residues 14–435 (YRGSATSKNY…TSAASKKNTV (422 aa)). Composition is skewed to polar residues over residues 17–28 (SATSKNYVQKGT) and 37–46 (AKNNNRNLAS). The span at 59-73 (SGSYSDGDNGSSSSS) shows a compositional bias: low complexity. A compositionally biased stretch (polar residues) spans 99-110 (TLNNHSSQSSPE). The span at 117-128 (ESLKRRNDEAEG) shows a compositional bias: basic and acidic residues. The segment covering 169–186 (TLNSHSSQSSPETPANTR) has biased composition (polar residues). The span at 187-198 (ESLKRRTDEAEG) shows a compositional bias: basic and acidic residues. Polar residues predominate over residues 239–256 (TLNSHSYQSSPETPANTR). The span at 257–268 (ESLKRRTDEAEG) shows a compositional bias: basic and acidic residues. Thr-309 carries the phosphothreonine modification. The span at 309-327 (TLNSHSSQSSPETPANTRE) shows a compositional bias: polar residues. Basic and acidic residues predominate over residues 328 to 338 (SLNRRNYEAEG). Ser-339 is modified (phosphoserine). The span at 379 to 397 (TLNSHSSQSSPETPANTRE) shows a compositional bias: polar residues. Basic and acidic residues predominate over residues 398–408 (SLNRRNYEAEG). The segment covering 416–433 (RTSSTPVGQSTSAASKKN) has biased composition (polar residues). In terms of domain architecture, JmjC spans 606–742 (NPSSYLVQLR…NLMEKLMPLV (137 aa)). Residues His-646, Asp-648, and His-708 each coordinate Fe cation.

The protein belongs to the ROX family. NO66 subfamily. It depends on Fe(2+) as a cofactor.

Its subcellular location is the nucleus. It carries out the reaction N(6),N(6)-dimethyl-L-lysyl(36)-[histone H3] + 2 2-oxoglutarate + 2 O2 = L-lysyl(36)-[histone H3] + 2 formaldehyde + 2 succinate + 2 CO2. In terms of biological role, oxygenase that can act as both a histone lysine demethylase and a ribosomal histidine hydroxylase. Specifically demethylates 'Lys-4' (H3K4me) and 'Lys-36' (H3K36me) of histone H3, thereby playing a central role in histone code. The chain is Bifunctional lysine-specific demethylase and histidyl-hydroxylase NO66 from Drosophila pseudoobscura pseudoobscura (Fruit fly).